A 328-amino-acid polypeptide reads, in one-letter code: Radiation response metalloprotease IrrE (328 aa).

A disordered region spans residues 1 to 31 (MPSANVSPPCPSGVRGGGMGPKAKAEASKPH). Histidine 118 provides a ligand contact to Zn(2+). Residue glutamate 119 is part of the active site. The Zn(2+) site is built by histidine 122 and glutamate 149. Disordered stretches follow at residues 217 to 238 (PREQ…LTVR) and 309 to 328 (RLGR…DAAQ).

In terms of biological role, plays a central regulatory role in DNA repair and protection pathways in response to radiation stress. Acts as a site-specific metalloprotease that cleaves and inactivates the repressor protein DdrO, resulting in induced expression of genes required for DNA repair and cell survival after exposure to radiation. Regulates the expression of dozens of proteins from different pathways, including the important DNA repair proteins RecA and PprA. Binds to the promoters of recA and pprA. The polypeptide is Radiation response metalloprotease IrrE (Deinococcus radiodurans (strain ATCC 13939 / DSM 20539 / JCM 16871 / CCUG 27074 / LMG 4051 / NBRC 15346 / NCIMB 9279 / VKM B-1422 / R1)).